Reading from the N-terminus, the 318-residue chain is Putative fimbrium tip subunit Fim1F (318 aa).

The N-terminal stretch at 1–24 (MRFNVVLFMLIVALLGGLSTCSSE) is a signal peptide. A propeptide spanning residues 25–50 (VPIGFDTDELSFDMSLVLLTGDMQTK) is cleaved from the precursor.

The protein belongs to the bacteroidetes fimbrillin superfamily. FimA/Mfa1 family. As to quaternary structure, may be part of the fimbrial tip.

It is found in the fimbrium. Its function is as follows. Putative component of the fimbrium tip. Fimbriae are filamentous appendages on the cell surface that mediate cell adhesion and biofilm formation. This is Putative fimbrium tip subunit Fim1F from Parabacteroides distasonis (strain ATCC 8503 / DSM 20701 / CIP 104284 / JCM 5825 / NCTC 11152).